The sequence spans 234 residues: MEFTPPLQQGILLRRYKRFLADVQLSDGSEITLHCPNTGSMRNCLYPGETVWFSTSDNPKRKYAHTWELMTTPDAGLIGIHSGQANTLAEEAINKGIIKELTGYDSLSREVKYGDENSRIDILLQGAQKPACYIEVKSCTLLEDGQGYFPDAVSLRGQKHLRELMHMVSQGHRAVLLFVVQHSDIFSVAPAAHIDPEYAKLLKKAVLAGVEVLAYRCEMSPTEIHLAQACVVRV.

The protein belongs to the SfsA family.

This is Sugar fermentation stimulation protein homolog from Shewanella baltica (strain OS223).